We begin with the raw amino-acid sequence, 392 residues long: MSFLTLKDVDLKDKKVLVRVDFNVPVKDGKVTSKVRIEAAIPTIQYILDQGGAVILMSHLGRPTEGEYDSQFSLEPVAKALSEIINKPVKFAKDWLDGVDVKAGEIVMCENVRFNSGEKKSTDDLSKKIASLGDVFVMDAFATAHRAQASTYGVAKYIPVACAGILLTNEIQALEKALKSPKKPMAAIVGGSKVSTKLSVLNNLLDKVEILIVGGGIANTFIKAEGFDVGNSLYEQDLVAEATEILAKAKALGVNIPVPVDVRVAKEFSENAQAIIKKVSDVVADEMILDIGPESQKIIAELLKSANTILWNGPVGVFEFDNFAEGTKALSLAIAQSHAFSVAGGGDTIAAIEKFGIKDQVSYISTAGGAFLEFLEGKKLPAIEILKEKAIR.

Substrate is bound by residues 21-23, Arg36, 59-62, Arg113, and Arg146; these read DFN and HLGR. ATP-binding positions include Lys197, Glu319, and 345 to 348; that span reads GGDT.

It belongs to the phosphoglycerate kinase family. In terms of assembly, monomer.

It localises to the cytoplasm. The enzyme catalyses (2R)-3-phosphoglycerate + ATP = (2R)-3-phospho-glyceroyl phosphate + ADP. It participates in carbohydrate degradation; glycolysis; pyruvate from D-glyceraldehyde 3-phosphate: step 2/5. This Francisella tularensis subsp. tularensis (strain FSC 198) protein is Phosphoglycerate kinase.